The sequence spans 262 residues: MRVLVSNDDGVDAPGIKILADALRNAGHEVMVVAPDRDRSGASNSLTLDTPIRAKQIDMHTYSVAGTPTDCVHLALTGLLNYDPDIVVSGINNTGNLGDDVIYSGTVSAAMEGRFLGLPAVAVSLVTLCREGQQAPQYETAAHAAINIVAQLKTDPLPADTILNVNVPDVTWQQMRGFKVTRLGNRHRSAPCLTQTDPRGHTIYWIGPAGPEQDAGPGTDFDAVRNTYISITPIHVDLTRYQALENVTRWTDRLTAHMDWPT.

Positions 8, 9, 40, and 92 each coordinate a divalent metal cation.

The protein belongs to the SurE nucleotidase family. It depends on a divalent metal cation as a cofactor.

It is found in the cytoplasm. The enzyme catalyses a ribonucleoside 5'-phosphate + H2O = a ribonucleoside + phosphate. Its function is as follows. Nucleotidase that shows phosphatase activity on nucleoside 5'-monophosphates. The sequence is that of 5'-nucleotidase SurE from Xylella fastidiosa (strain M23).